The primary structure comprises 56 residues: uncharacterized protein (56 aa).

This sequence belongs to the archaeal ATPase family.

This is an uncharacterized protein from Methanocaldococcus jannaschii (strain ATCC 43067 / DSM 2661 / JAL-1 / JCM 10045 / NBRC 100440) (Methanococcus jannaschii).